Consider the following 609-residue polypeptide: Dihydroxy-acid dehydratase 1 (609 aa).

Asp-81 is a binding site for Mg(2+). A [2Fe-2S] cluster-binding site is contributed by Cys-122. Positions 123 and 124 each coordinate Mg(2+). Lys-124 is subject to N6-carboxylysine. A [2Fe-2S] cluster-binding site is contributed by Cys-195. Position 491 (Glu-491) interacts with Mg(2+). Ser-517 serves as the catalytic Proton acceptor.

It belongs to the IlvD/Edd family. In terms of assembly, homodimer. [2Fe-2S] cluster is required as a cofactor. Requires Mg(2+) as cofactor.

It catalyses the reaction (2R)-2,3-dihydroxy-3-methylbutanoate = 3-methyl-2-oxobutanoate + H2O. The enzyme catalyses (2R,3R)-2,3-dihydroxy-3-methylpentanoate = (S)-3-methyl-2-oxopentanoate + H2O. It functions in the pathway amino-acid biosynthesis; L-isoleucine biosynthesis; L-isoleucine from 2-oxobutanoate: step 3/4. It participates in amino-acid biosynthesis; L-valine biosynthesis; L-valine from pyruvate: step 3/4. Its function is as follows. Functions in the biosynthesis of branched-chain amino acids. Catalyzes the dehydration of (2R,3R)-2,3-dihydroxy-3-methylpentanoate (2,3-dihydroxy-3-methylvalerate) into 2-oxo-3-methylpentanoate (2-oxo-3-methylvalerate) and of (2R)-2,3-dihydroxy-3-methylbutanoate (2,3-dihydroxyisovalerate) into 2-oxo-3-methylbutanoate (2-oxoisovalerate), the penultimate precursor to L-isoleucine and L-valine, respectively. The polypeptide is Dihydroxy-acid dehydratase 1 (Acinetobacter baylyi (strain ATCC 33305 / BD413 / ADP1)).